We begin with the raw amino-acid sequence, 722 residues long: Transmembrane channel-like protein 8 (722 aa).

The tract at residues 1–21 (MFRQWSVQSGPAPRRPESQAA) is disordered. Over 1–118 (MFRQWSVQSG…GIQSYFTFLR (118 aa)) the chain is Cytoplasmic. Serine 6 and serine 18 each carry phosphoserine. Residues 119–139 (FLLLLNLLTMLLTACFVLLPL) form a helical membrane-spanning segment. Over 140–204 (VWLRPPELGP…AGPESSSEYS (65 aa)) the chain is Lumenal. Asparagine 184 carries an N-linked (GlcNAc...) asparagine glycan. A helical transmembrane segment spans residues 205-225 (IRLAYLLSPMVCLLLCFCGIL). The Cytoplasmic portion of the chain corresponds to 226-307 (QRMAEGLPQQ…CRLLTYLRTN (82 aa)). Residues 308-328 (ILIVLLVVGAISAIFWATKYS) form a helical membrane-spanning segment. Topologically, residues 329–375 (QDNKEESLFLVLQYLPPGVISLVNFLGPQLFTVLIQLENYPPGTEVN) are lumenal. Residues 366–534 (ENYPPGTEVN…SPRRFRASSS (169 aa)) form a TMC domain region. Asparagine 375 carries N-linked (GlcNAc...) asparagine glycosylation. The chain crosses the membrane as a helical span at residues 376-396 (LTLIWCVVLKLASLGMFSFSL). The Cytoplasmic portion of the chain corresponds to 397-430 (GQTVLCIGRNKTSCESYGYNACDYQCWENSVGEE). A helical transmembrane segment spans residues 431–451 (LYKLIIFNFLLTVAFAFLVSL). The Lumenal segment spans residues 452-492 (PRRLLVERFSGWFWTWLDREEFLVPKNVLDIVAAQTVTWMG). Residues 493 to 513 (LFYCPLLPLLNSVFLFLTFYI) form a helical membrane-spanning segment. The Cytoplasmic segment spans residues 514 to 536 (KKYTLLRNSRASPRRFRASSSTF). A helical membrane pass occupies residues 537–557 (FFHLVLLLGLLLAAVPLAYVI). Residues 558–598 (SSTHSSWDCGLFTNYSAPWQVVPELVALQLPLPSQRALRYL) lie on the Lumenal side of the membrane. Asparagine 571 carries an N-linked (GlcNAc...) asparagine glycan. A helical transmembrane segment spans residues 599–619 (SSHAFSFPLLILLSIVLTVCI). Residues 620–722 (SQSRANARAI…RFHFPSRTEL (103 aa)) lie on the Cytoplasmic side of the membrane. Residues serine 658, serine 663, and serine 673 each carry the phosphoserine modification. The interval 658–722 (SPEPGSPHSR…RFHFPSRTEL (65 aa)) is disordered. Over residues 678–687 (FPCPGSPGPR) the composition is skewed to pro residues. A compositionally biased stretch (low complexity) spans 689 to 712 (PRLAPSNRLSSSSLGAPSASVPAS). At serine 698 the chain carries Phosphoserine.

This sequence belongs to the TMC family. Interacts with TMC6. Interacts and forms a complex with TMC6 and CIB1; the interaction stabilizes each component of the complex. Interacts and forms a complex with TMC6 and SLC30A1/ZNT1; the interaction regulates zinc transport into the ER. Interacts with TRADD; the interaction competes with TRADD/RIPK1/TRAF2/cIAPs complex I formation and facilites complex II formation. As to expression, expressed in thymus, lung, prostate, placenta, testis and spleen. Expressed in lymphocytes and peripheral lymphocytes.

The protein localises to the endoplasmic reticulum membrane. It is found in the golgi apparatus membrane. Its subcellular location is the nucleus membrane. Acts as a regulatory protein involved in the regulation of numerous cellular processes. Together with its homolog TMC6/EVER1, forms a complex with calcium-binding protein CIB1 in lymphocytes and keratynocytes where TMC6 and TMC8 stabilize CIB1 levels and reciprocally. Together with TMC6, also forms a complex with and activates zinc transporter ZNT1 at the ER membrane of keratynocytes, thereby facilitating zinc uptake into the ER. Also inhibits receptor-mediated calcium release from ER stores and calcium activated and volume regulated chloride channels. Down-regulates the activity of transcription factors induced by zinc and cytokines. Also sequesters TRADD which impairs the recruitment of TRAF2 and RIPK1 in the pro-survival complex I and promotes proapoptotic complex II formation, and may therefore be involved in TNF-induced cell death/survival decisions. The sequence is that of Transmembrane channel-like protein 8 from Mus musculus (Mouse).